The primary structure comprises 524 residues: Zinc finger CCCH domain-containing protein 37 (524 aa).

Positions 19–39 (ASTVSPAPPPPQQPLPPKTGL) are disordered. A compositionally biased stretch (pro residues) spans 24–35 (PAPPPPQQPLPP). C3H1-type zinc fingers lie at residues 174 to 202 (RAGE…HPIW), 225 to 253 (RPGE…HPRE), and 268 to 296 (RPSE…HPKD). Residues 300-319 (PSSSQDIGSSVGLTSEPDAT) are disordered. 3 consecutive C3H1-type zinc fingers follow at residues 340–368 (RSGE…HPER), 420–448 (RPGQ…HPAD), and 473–501 (REGA…HPPP). Positions 505–524 (MAKTTSEADAAGATNTDTTQ) are disordered. The segment covering 512–524 (ADAAGATNTDTTQ) has biased composition (low complexity).

As to quaternary structure, interacts with HEN4. Interacts with FLK and PEP. In terms of tissue distribution, highly expressed in inflorescences, at intermediate levels in leaves and stems and at lower levels in roots.

It is found in the nucleus speckle. Involved in flower development. Functions in floral reproductive organ identity by binding AGAMOUS (AG) pre-mRNA and promoting its processing. Functions in association with HUA2 and HEN4. The polypeptide is Zinc finger CCCH domain-containing protein 37 (HUA1) (Arabidopsis thaliana (Mouse-ear cress)).